The primary structure comprises 546 residues: CTP synthase (546 aa).

Positions 1–267 (MSKFVFVTGG…AQQTLELLNL (267 aa)) are amidoligase domain. Position 13 (serine 13) interacts with CTP. Serine 13 contacts UTP. Residues 14–19 (SIGKGI) and aspartate 71 contribute to the ATP site. Aspartate 71 and glutamate 141 together coordinate Mg(2+). Residues 148–150 (DIE), 188–193 (KTKPTQ), and lysine 224 contribute to the CTP site. UTP contacts are provided by residues 188–193 (KTKPTQ) and lysine 224. The Glutamine amidotransferase type-1 domain maps to 292 to 534 (EIAIVGKYVQ…MKAALKGREE (243 aa)). Residue glycine 354 coordinates L-glutamine. Cysteine 381 functions as the Nucleophile; for glutamine hydrolysis in the catalytic mechanism. L-glutamine is bound by residues 382–385 (LGMQ), glutamate 405, and arginine 462. Active-site residues include histidine 507 and glutamate 509.

The protein belongs to the CTP synthase family. Homotetramer.

The enzyme catalyses UTP + L-glutamine + ATP + H2O = CTP + L-glutamate + ADP + phosphate + 2 H(+). It carries out the reaction L-glutamine + H2O = L-glutamate + NH4(+). It catalyses the reaction UTP + NH4(+) + ATP = CTP + ADP + phosphate + 2 H(+). It participates in pyrimidine metabolism; CTP biosynthesis via de novo pathway; CTP from UDP: step 2/2. With respect to regulation, allosterically activated by GTP, when glutamine is the substrate; GTP has no effect on the reaction when ammonia is the substrate. The allosteric effector GTP functions by stabilizing the protein conformation that binds the tetrahedral intermediate(s) formed during glutamine hydrolysis. Inhibited by the product CTP, via allosteric rather than competitive inhibition. In terms of biological role, catalyzes the ATP-dependent amination of UTP to CTP with either L-glutamine or ammonia as the source of nitrogen. Regulates intracellular CTP levels through interactions with the four ribonucleotide triphosphates. This chain is CTP synthase, found in Microcystis aeruginosa (strain NIES-843 / IAM M-2473).